The primary structure comprises 221 residues: MSKPSLELKGASFTLSVLHINSSDLNAVMAELDSKLAQAPQFFLGAPLVVNLSAIQDNDFNLHGLKELLLSRQLVIVGITGATTALSNQAKTLGLAIVKAGKQSVTPPPAPRQTKVLKQNIRSGQQVYAKNGDLIIFGAVGNGAEVIADGSIHIYGALRGKAMAGAAGDSSAVIIAHSLEAELVSIAGQYWLAENLQQHSSDKSGCIRLNGESLIVESLPL.

It belongs to the MinC family. In terms of assembly, interacts with MinD and FtsZ.

Cell division inhibitor that blocks the formation of polar Z ring septums. Rapidly oscillates between the poles of the cell to destabilize FtsZ filaments that have formed before they mature into polar Z rings. Prevents FtsZ polymerization. The chain is Probable septum site-determining protein MinC from Shewanella sp. (strain ANA-3).